Reading from the N-terminus, the 277-residue chain is Large ribosomal subunit protein uL2 (277 aa).

2 disordered regions span residues 32–58 and 225–277; these read KSLT…RGGG and VAMN…RRNK. A compositionally biased stretch (basic residues) spans 258–277; sequence YKTRKKKRYSDKFIIKRRNK.

Belongs to the universal ribosomal protein uL2 family. In terms of assembly, part of the 50S ribosomal subunit. Forms a bridge to the 30S subunit in the 70S ribosome.

Functionally, one of the primary rRNA binding proteins. Required for association of the 30S and 50S subunits to form the 70S ribosome, for tRNA binding and peptide bond formation. It has been suggested to have peptidyltransferase activity; this is somewhat controversial. Makes several contacts with the 16S rRNA in the 70S ribosome. The polypeptide is Large ribosomal subunit protein uL2 (Borrelia garinii subsp. bavariensis (strain ATCC BAA-2496 / DSM 23469 / PBi) (Borreliella bavariensis)).